Here is a 492-residue protein sequence, read N- to C-terminus: ERAD-associated E3 ubiquitin-protein ligase HRD1A (492 aa).

At 1–3 (MIR) the chain is on the cytoplasmic side. Residues 4–24 (LRTYAGLSFMATLAVIYHAFS) form a helical membrane-spanning segment. At 25-40 (SRGQFYPATVYLSTSK) the chain is on the lumenal side. The helical transmembrane segment at 41 to 61 (ISLVLLLNMCLVLMLSLWHLV) threads the bilayer. The Cytoplasmic portion of the chain corresponds to 62 to 98 (KFVFLGSLREAEVERLNEQAWRELMEILFAITIFRQD). Residues 99–119 (FSSGFLPLVVTLLLIKALHWL) traverse the membrane as a helical segment. Residues 120 to 135 (AQKRVEYIETTPSVSK) lie on the Lumenal side of the membrane. A helical transmembrane segment spans residues 136–156 (LSHFRIVSFMGFLLLVDSLFM). The Cytoplasmic portion of the chain corresponds to 157-170 (YSSIRHLIQSRQAS). A helical transmembrane segment spans residues 171 to 191 (VSLFFSFEYMILATTTVAIFV). Over 192 to 221 (KYVFYVTDMLMDGQWEKKPVYTFYLELIRD) the chain is Lumenal. A helical membrane pass occupies residues 222-242 (LLHLSMYICFFFVIFMNYGVP). Residues 243 to 492 (LHLLRELYET…KGKSVADAAE (250 aa)) lie on the Cytoplasmic side of the membrane. The RING-type; atypical zinc finger occupies 292-330 (CIICREEMTNAKKLICGHLFHVHCLRSWLERQQTCPTCR). Disordered regions lie at residues 339-379 (ATSA…NSLS) and 470-492 (ETRK…DAAE). Residues 351 to 378 (QGSQQGTSSSGNQGSEISSSAGVSNNSL) are compositionally biased toward low complexity. Positions 470 to 486 (ETRKPESAGEPENKGKS) are enriched in basic and acidic residues.

This sequence belongs to the HRD1 family.

The protein resides in the endoplasmic reticulum membrane. It carries out the reaction S-ubiquitinyl-[E2 ubiquitin-conjugating enzyme]-L-cysteine + [acceptor protein]-L-lysine = [E2 ubiquitin-conjugating enzyme]-L-cysteine + N(6)-ubiquitinyl-[acceptor protein]-L-lysine.. It functions in the pathway protein modification; protein ubiquitination. Probable component of the HRD1 ubiquitin ligase complex that mediates the rapid degradation of misfolded endoplasmic reticulum (ER) proteins, a process called ER-associated degradation (ERAD). Targets the misfolded LRR receptor kinase BRI1. Functions redundantly with HRD3B. The sequence is that of ERAD-associated E3 ubiquitin-protein ligase HRD1A from Arabidopsis thaliana (Mouse-ear cress).